The chain runs to 570 residues: Peptidyl-prolyl cis-trans isomerase FKBP9 (570 aa).

Positions 1 to 24 (MAFRGWRPPPPPLLLLLLWVTGQA) are cleaved as a signal peptide. 4 consecutive PPIase FKBP-type domains span residues 54–142 (GDFV…MDIW), 166–254 (SDFV…LDLH), 278–365 (GDFL…IDFH), and 389–477 (GDYL…LELV). Asparagine 174, asparagine 286, asparagine 302, and asparagine 397 each carry an N-linked (GlcNAc...) asparagine glycan. EF-hand domains lie at 488 to 523 (WNGE…QVAS) and 533 to 568 (DAEL…AKHD). Ca(2+)-binding residues include aspartate 501, aspartate 503, asparagine 505, glutamate 507, glutamate 512, aspartate 546, asparagine 548, aspartate 550, lysine 552, and glutamate 557. The short motif at 567 to 570 (HDEL) is the Prevents secretion from ER element.

Phosphorylated.

It localises to the endoplasmic reticulum. The enzyme catalyses [protein]-peptidylproline (omega=180) = [protein]-peptidylproline (omega=0). Its activity is regulated as follows. Inhibited by FK506. Its function is as follows. PPIases accelerate the folding of proteins during protein synthesis. This is Peptidyl-prolyl cis-trans isomerase FKBP9 (FKBP9) from Homo sapiens (Human).